The primary structure comprises 668 residues: Methionine--tRNA ligase (668 aa).

Residues 11–21 (AYTNGPLHIGH) carry the 'HIGH' region motif. Residues Cys-146, Cys-149, Cys-159, and Cys-162 each coordinate Zn(2+). The short motif at 332–336 (KMSTS) is the 'KMSKS' region element. Residue Thr-335 coordinates ATP. Positions 567–668 (EFNRLDLRVG…REVEPGERIR (102 aa)) constitute a tRNA-binding domain.

Belongs to the class-I aminoacyl-tRNA synthetase family. MetG type 1 subfamily. As to quaternary structure, homodimer. Zn(2+) serves as cofactor.

The protein resides in the cytoplasm. It catalyses the reaction tRNA(Met) + L-methionine + ATP = L-methionyl-tRNA(Met) + AMP + diphosphate. Functionally, is required not only for elongation of protein synthesis but also for the initiation of all mRNA translation through initiator tRNA(fMet) aminoacylation. The polypeptide is Methionine--tRNA ligase (Methanopyrus kandleri (strain AV19 / DSM 6324 / JCM 9639 / NBRC 100938)).